Reading from the N-terminus, the 309-residue chain is Ankyrin repeat and SOCS box protein 12 (309 aa).

ANK repeat units follow at residues 63 to 92, 96 to 125, 129 to 158, 171 to 200, and 213 to 243; these read VPGT…DVDS, KAQT…SPGG, NNCS…EANV, SCSG…DPDY, and RPRT…NIYL. The 41-residue stretch at 268–308 folds into the SOCS box domain; sequence PRSLLSQVRLVVRRALCQAGQPQAINQLDIPPMLISYLKHQ.

The protein belongs to the ankyrin SOCS box (ASB) family. Interacts with CUL5 and RNF7.

It participates in protein modification; protein ubiquitination. Probable substrate-recognition component of a SCF-like ECS (Elongin-Cullin-SOCS-box protein) E3 ubiquitin-protein ligase complex which mediates the ubiquitination and subsequent proteasomal degradation of target proteins. In Homo sapiens (Human), this protein is Ankyrin repeat and SOCS box protein 12 (ASB12).